A 439-amino-acid polypeptide reads, in one-letter code: Serine hydroxymethyltransferase (439 aa).

126–128 contributes to the (6S)-5,6,7,8-tetrahydrofolate binding site; sequence AHV. K232 is subject to N6-(pyridoxal phosphate)lysine.

The protein belongs to the SHMT family. In terms of assembly, homodimer. Pyridoxal 5'-phosphate serves as cofactor.

It is found in the cytoplasm. It participates in amino-acid biosynthesis; glycine biosynthesis; glycine from L-serine: step 1/1. Its function is as follows. Catalyzes the reversible interconversion of serine and glycine with a modified folate serving as the one-carbon carrier. Also exhibits a pteridine-independent aldolase activity toward beta-hydroxyamino acids, producing glycine and aldehydes, via a retro-aldol mechanism. This Staphylothermus marinus (strain ATCC 43588 / DSM 3639 / JCM 9404 / F1) protein is Serine hydroxymethyltransferase.